The primary structure comprises 206 residues: MKVKICGVTHPEDAEYAALLGADYIGVIFAEKSKRKTSLSMAKSIADTTKRLGAEPVGVFVEQTTDQIIAICEQTGIKTIQLHSTFPLGALENLLRDYSIIYAISVRENGDVCHPQSLPPKVIPLYDTEKGGTGKQFNWKAFSLPKDTFWMLAGGLNPKNIEEAVATLHPNGVDVATGVEFPNKTRKDPDLLKAFILSAKKSGEKI.

This sequence belongs to the TrpF family.

The enzyme catalyses N-(5-phospho-beta-D-ribosyl)anthranilate = 1-(2-carboxyphenylamino)-1-deoxy-D-ribulose 5-phosphate. The protein operates within amino-acid biosynthesis; L-tryptophan biosynthesis; L-tryptophan from chorismate: step 3/5. This is N-(5'-phosphoribosyl)anthranilate isomerase from Chlamydia caviae (strain ATCC VR-813 / DSM 19441 / 03DC25 / GPIC) (Chlamydophila caviae).